Reading from the N-terminus, the 76-residue chain is uncharacterized protein (76 aa).

This is an uncharacterized protein from Homo sapiens (Human).